The sequence spans 1600 residues: MKKGGFGSGGFGAFSSSTASLSYVAPPPDLSSVPQDVIVPFKNLLKRDSTTKSKALEEILACVKKSDQPVDDSVIDVWAQLYPRVAIDNNRRVRELSHNLLLELVKSAKKRIEKTLPKLVGPWVAGTFDKDKGVARAALAVSAHILDSDQKKAKFWIAFQGKLLEYSNEAIRETADSLSDERTTSKEDMEAKYYRVLGSSMAMIQHLLPTVKDDQYPDELKRFFDADTLWTLAASDDASVRRAFYQLVASYLDNKPSLLEPKLKDVGKVLVAEGPKKEQRGSAVDLLRALISVTKRFPKVWGSKSPLDRLRPLVQKGSQGGSDEFWTELDQLLAILPTSSPDYAANAPAFLKSMRTAITSREERRQNAASAWACYLNTVDRITAGSTPSPDFLQENLYPLTREYLHPSTETSTWAYAQPPHVFKAWKIVPYTTNEQVRSSAKEEWQKLGDDFAAGLSNSLPEVSPDYEKSQLELAAQGDRWFTLVQGFLRGAPSQQSFDGDADLPSVVASTSRKLLESAQDLLARRNYKPFCAAAVLKAAFTKAPVLCAKSDLIKKVFPLDDQEAFEKIVVSRSLPFLASCLGAVTPDQPDFSEQVWVKLIDAALSHGFPSGAPIVKELVSVPLPQTVAQKSEALQNFIVEAWQDFFKEEPSSPVVEQLCRASISHSVVDDKTLQSLASSFAQDIGVAGKYDPEFKALDLLLRNKSALFADAPVDLFTRLLSLEEISDSEKATKVAAIRSLIQKQYGGNKLWLEVIRLSLAEADPSSLDINTLIRHAKEILSSGVPLTDLLPSAKAWNTELYSFLRDNPDPSLSITSSFGGAYFLATESEGSTLTTQKRDRQGRSIPARMAIYTTNLFTDVDLESVQADLLELIFLTAVLANDDLTVMKENGLWSLPASEDIRTERSDEIQSFLDLGTSLLARVAGASASWKEGDLDGTSLAEMLIQSLLQQAVDFSAKALYASKALTELFQALVSVHGYPAGAKFDEWFNKLGIMKATPQTVFAAIAFLTGFDEGLASSRAVANLYNRLVSDIVGCFPSSPKTLYNVVLLNICLSVYPPAKTPVEQRKLVFALKQFTTWVQTPDEMTFGLTAEVCKGIHRILPNVAQVYGPYWREAIDYCLLLWEKARNDTPQRWPAYVLPSIRLISSMETLEDPNDDLVEALEETAVDRSKALIRLLELPHDVVNTARQILDETLCRAVQKIPLKHLTSEKDLLTNLYGLLSSGSREVQTAAFGLLHRALPAQQEEEVLETLLEEKVAKVPDELLSIIQAVPELEKYTDEELAGFPVDVRSYLLGWHLVFDAYNQAPLQVRKQYTDSLKADNSLNALLELMFDVLGHSTGQALNLDKNTFSAEHIRSYDVSQSEEGTKERDMQWLLVHLFYLSLKFLPGLVKSWYLDLRSKQTKIALDSWMAKYYAPLLISDALDEVNDWASSQEAPQEDEKELRVRVNRTAKEVSAGYEIDEDFASIAIKIPAGYPLESVEVIGENRVAVNEKKWQSWVRATQGVITFANGSITDGLAAFRRNIIGALKGHTECPICYAVVSADKKLPDKRCSTCNNLFHRLCLYKWFQNSNKNTCPLCRNPIDYLGSSTRRGGGGD.

HEAT repeat units lie at residues 31–65, 114–150, 161–202, 245–288, 291–344, 526–606, 853–904, 962–986, 1045–1083, 1289–1324, and 1325–1369; these read SSVPQDVIVPFKNLLKRDSTTKSKALEEILACVKK, KTLPKLVGPWVAGTFDKDKGVARAALAVSAHILDSDQ, GKLL…SSMA, YQLV…DLLR, ISVT…PDYA, RNYK…AALS, YTTN…DIRT, YASKALTELFQALVSVHGYPAGAKF, LYNVVLLNICLSVYPPAKTPVEQRKLVFALKQFTTWVQT, VDVRSYLLGWHLVFDAYNQAPLQVRKQYTDSLKADN, and SLNA…EEGT. An RING-type; degenerate zinc finger spans residues 1537–1583; it reads CPICYAVVSADKKLPDKRCSTCNNLFHRLCLYKWFQNSNKNTCPLCR.

It belongs to the LTN1 family. Component of the ribosome quality control complex (RQC), composed of the E3 ubiquitin ligase RKR1/LTN1, RQC1 and RQC2, as well as CDC48 and its ubiquitin-binding cofactors associated with the 60S ribosomal subunits.

The protein localises to the nucleus. It localises to the cytoplasm. Its subcellular location is the cytosol. The catalysed reaction is S-ubiquitinyl-[E2 ubiquitin-conjugating enzyme]-L-cysteine + [acceptor protein]-L-lysine = [E2 ubiquitin-conjugating enzyme]-L-cysteine + N(6)-ubiquitinyl-[acceptor protein]-L-lysine.. It participates in protein modification; protein ubiquitination. Its function is as follows. E3 ubiquitin-protein ligase component of the ribosome quality control complex (RQC), a ribosome-associated complex that mediates ubiquitination and extraction of incompletely synthesized nascent chains for proteasomal degradation. Mediates ubiquitination of proteins derived from mRNAs lacking stop codons (non-stop proteins) and other translation arrest products induced by poly-lysine sequences and tandem rare codons. Ubiquitination leads to CDC48 recruitment for extraction and degradation of the incomplete translation product. May indirectly play a role in chromatin function and transcription. The sequence is that of E3 ubiquitin-protein ligase listerin (rkr-1) from Neurospora crassa (strain ATCC 24698 / 74-OR23-1A / CBS 708.71 / DSM 1257 / FGSC 987).